Consider the following 446-residue polypeptide: NADH-quinone oxidoreductase subunit D (446 aa).

It belongs to the complex I 49 kDa subunit family. As to quaternary structure, NDH-1 is composed of 14 different subunits. Subunits NuoB, C, D, E, F, and G constitute the peripheral sector of the complex.

The protein localises to the cell membrane. It carries out the reaction a quinone + NADH + 5 H(+)(in) = a quinol + NAD(+) + 4 H(+)(out). NDH-1 shuttles electrons from NADH, via FMN and iron-sulfur (Fe-S) centers, to quinones in the respiratory chain. The immediate electron acceptor for the enzyme in this species is believed to be a menaquinone. Couples the redox reaction to proton translocation (for every two electrons transferred, four hydrogen ions are translocated across the cytoplasmic membrane), and thus conserves the redox energy in a proton gradient. This chain is NADH-quinone oxidoreductase subunit D, found in Mycobacterium sp. (strain JLS).